We begin with the raw amino-acid sequence, 495 residues long: UDP-N-acetylmuramoyl-L-alanyl-D-glutamate--2,6-diaminopimelate ligase (495 aa).

UDP-N-acetyl-alpha-D-muramoyl-L-alanyl-D-glutamate contacts are provided by residues Leu27, Ser29, and 44-46 (HQA). 116-122 (GTNGKTT) contacts ATP. UDP-N-acetyl-alpha-D-muramoyl-L-alanyl-D-glutamate is bound by residues Asn157, 158-159 (TT), Ser185, Gln191, and Arg193. Lys225 carries the N6-carboxylysine modification. Meso-2,6-diaminopimelate contacts are provided by residues Arg390, 414-417 (DNPR), Gly465, and Glu469. The Meso-diaminopimelate recognition motif motif lies at 414-417 (DNPR).

Belongs to the MurCDEF family. MurE subfamily. It depends on Mg(2+) as a cofactor. Carboxylation is probably crucial for Mg(2+) binding and, consequently, for the gamma-phosphate positioning of ATP.

It is found in the cytoplasm. The catalysed reaction is UDP-N-acetyl-alpha-D-muramoyl-L-alanyl-D-glutamate + meso-2,6-diaminopimelate + ATP = UDP-N-acetyl-alpha-D-muramoyl-L-alanyl-gamma-D-glutamyl-meso-2,6-diaminopimelate + ADP + phosphate + H(+). Its pathway is cell wall biogenesis; peptidoglycan biosynthesis. Functionally, catalyzes the addition of meso-diaminopimelic acid to the nucleotide precursor UDP-N-acetylmuramoyl-L-alanyl-D-glutamate (UMAG) in the biosynthesis of bacterial cell-wall peptidoglycan. This chain is UDP-N-acetylmuramoyl-L-alanyl-D-glutamate--2,6-diaminopimelate ligase, found in Enterobacter sp. (strain 638).